Consider the following 215-residue polypeptide: N-(5'-phosphoribosyl)anthranilate isomerase (215 aa).

This sequence belongs to the TrpF family.

It carries out the reaction N-(5-phospho-beta-D-ribosyl)anthranilate = 1-(2-carboxyphenylamino)-1-deoxy-D-ribulose 5-phosphate. Its pathway is amino-acid biosynthesis; L-tryptophan biosynthesis; L-tryptophan from chorismate: step 3/5. The sequence is that of N-(5'-phosphoribosyl)anthranilate isomerase from Rippkaea orientalis (strain PCC 8801 / RF-1) (Cyanothece sp. (strain PCC 8801)).